We begin with the raw amino-acid sequence, 304 residues long: Probable aspartoacylase (304 aa).

Histidine 13 and glutamate 16 together coordinate Zn(2+). Substrate contacts are provided by residues arginine 55 and 62–63 (NR). Position 105 (histidine 105) interacts with Zn(2+). Glutamate 163 and tyrosine 273 together coordinate substrate.

It belongs to the AspA/AstE family. Aspartoacylase subfamily. Zn(2+) is required as a cofactor.

The enzyme catalyses an N-acyl-L-aspartate + H2O = a carboxylate + L-aspartate. This Prochlorococcus marinus (strain MIT 9313) protein is Probable aspartoacylase.